The primary structure comprises 240 residues: Flagellar L-ring protein (240 aa).

The first 20 residues, 1–20 (MIRNFLLFFMPIYAILFLSG), serve as a signal peptide directing secretion. Cys21 carries the N-palmitoyl cysteine lipid modification. Cys21 carries S-diacylglycerol cysteine lipidation.

This sequence belongs to the FlgH family. As to quaternary structure, the basal body constitutes a major portion of the flagellar organelle and consists of four rings (L,P,S, and M) mounted on a central rod.

The protein resides in the cell outer membrane. It is found in the bacterial flagellum basal body. Assembles around the rod to form the L-ring and probably protects the motor/basal body from shearing forces during rotation. This is Flagellar L-ring protein from Sulfurimonas denitrificans (strain ATCC 33889 / DSM 1251) (Thiomicrospira denitrificans (strain ATCC 33889 / DSM 1251)).